Reading from the N-terminus, the 250-residue chain is Indole-3-glycerol phosphate synthase (250 aa).

The protein belongs to the TrpC family.

It carries out the reaction 1-(2-carboxyphenylamino)-1-deoxy-D-ribulose 5-phosphate + H(+) = (1S,2R)-1-C-(indol-3-yl)glycerol 3-phosphate + CO2 + H2O. It participates in amino-acid biosynthesis; L-tryptophan biosynthesis; L-tryptophan from chorismate: step 4/5. The protein is Indole-3-glycerol phosphate synthase of Bacillus velezensis (strain DSM 23117 / BGSC 10A6 / LMG 26770 / FZB42) (Bacillus amyloliquefaciens subsp. plantarum).